Reading from the N-terminus, the 503-residue chain is 2-isopropylmalate synthase (503 aa).

Mn(2+)-binding residues include D1, H189, H191, and N225. One can recognise a Pyruvate carboxyltransferase domain in the interval 1 to 254 (DGEQALQASL…STNINHKEIY (254 aa)). Residues 379-503 (SLKFFSVQSI…NKNLKNLKKQ (125 aa)) form a regulatory domain region.

This sequence belongs to the alpha-IPM synthase/homocitrate synthase family. LeuA type 1 subfamily. Homodimer. It depends on Mn(2+) as a cofactor.

The protein localises to the cytoplasm. The enzyme catalyses 3-methyl-2-oxobutanoate + acetyl-CoA + H2O = (2S)-2-isopropylmalate + CoA + H(+). The protein operates within amino-acid biosynthesis; L-leucine biosynthesis; L-leucine from 3-methyl-2-oxobutanoate: step 1/4. Functionally, catalyzes the condensation of the acetyl group of acetyl-CoA with 3-methyl-2-oxobutanoate (2-ketoisovalerate) to form 3-carboxy-3-hydroxy-4-methylpentanoate (2-isopropylmalate). In Buchnera aphidicola subsp. Uroleucon ambrosiae, this protein is 2-isopropylmalate synthase.